We begin with the raw amino-acid sequence, 173 residues long: Bifunctional protein PyrR (173 aa).

The short motif at 93 to 105 (VILVDDVLYTGRT) is the PRPP-binding element.

The protein belongs to the purine/pyrimidine phosphoribosyltransferase family. PyrR subfamily. Homodimer and homohexamer; in equilibrium.

The catalysed reaction is UMP + diphosphate = 5-phospho-alpha-D-ribose 1-diphosphate + uracil. In terms of biological role, regulates transcriptional attenuation of the pyrimidine nucleotide (pyr) operon by binding in a uridine-dependent manner to specific sites on pyr mRNA. This disrupts an antiterminator hairpin in the RNA and favors formation of a downstream transcription terminator, leading to a reduced expression of downstream genes. Functionally, also displays a weak uracil phosphoribosyltransferase activity which is not physiologically significant. In Streptococcus thermophilus (strain ATCC BAA-491 / LMD-9), this protein is Bifunctional protein PyrR.